Here is a 445-residue protein sequence, read N- to C-terminus: Glucose-6-phosphate isomerase (445 aa).

Glutamate 284 (proton donor) is an active-site residue. Residues histidine 305 and lysine 419 contribute to the active site.

Belongs to the GPI family.

It localises to the cytoplasm. It catalyses the reaction alpha-D-glucose 6-phosphate = beta-D-fructose 6-phosphate. Its pathway is carbohydrate biosynthesis; gluconeogenesis. The protein operates within carbohydrate degradation; glycolysis; D-glyceraldehyde 3-phosphate and glycerone phosphate from D-glucose: step 2/4. Functionally, catalyzes the reversible isomerization of glucose-6-phosphate to fructose-6-phosphate. This chain is Glucose-6-phosphate isomerase, found in Leptospira borgpetersenii serovar Hardjo-bovis (strain JB197).